Reading from the N-terminus, the 511-residue chain is Maturase K (511 aa).

This sequence belongs to the intron maturase 2 family. MatK subfamily.

The protein localises to the plastid. Its subcellular location is the chloroplast. In terms of biological role, usually encoded in the trnK tRNA gene intron. Probably assists in splicing its own and other chloroplast group II introns. This chain is Maturase K, found in Nardus stricta (Mat-grass).